The sequence spans 369 residues: uncharacterized protein (369 aa).

The signal sequence occupies residues 1-19 (MKKLIAVAVLSACGSLAHA).

This is an uncharacterized protein from Haemophilus influenzae (strain ATCC 51907 / DSM 11121 / KW20 / Rd).